The sequence spans 388 residues: Chorismate synthase (388 aa).

2 residues coordinate NADP(+): R39 and R45. FMN contacts are provided by residues 130–132 (RSS), 251–252 (NA), G296, 311–315 (KPIPT), and R337.

The protein belongs to the chorismate synthase family. In terms of assembly, homotetramer. Requires FMNH2 as cofactor.

It catalyses the reaction 5-O-(1-carboxyvinyl)-3-phosphoshikimate = chorismate + phosphate. It functions in the pathway metabolic intermediate biosynthesis; chorismate biosynthesis; chorismate from D-erythrose 4-phosphate and phosphoenolpyruvate: step 7/7. In terms of biological role, catalyzes the anti-1,4-elimination of the C-3 phosphate and the C-6 proR hydrogen from 5-enolpyruvylshikimate-3-phosphate (EPSP) to yield chorismate, which is the branch point compound that serves as the starting substrate for the three terminal pathways of aromatic amino acid biosynthesis. This reaction introduces a second double bond into the aromatic ring system. In Lactococcus lactis subsp. lactis (strain IL1403) (Streptococcus lactis), this protein is Chorismate synthase.